The primary structure comprises 245 residues: E3 ubiquitin-protein ligase RNF138 (245 aa).

The residue at position 2 (Ala2) is an N-acetylalanine. The RING-type zinc finger occupies 18–58; that stretch reads CPVCQEVLKTPVRTTACQHVFCRKCFLTAMRESGAHCPLCR. Zn(2+) contacts are provided by Cys86, Cys89, His101, and Cys105. The C2HC RNF-type zinc-finger motif lies at 86-105; the sequence is CRCCAKQIKFYRMRHHYKSC. The segment at 125-154 is disordered; the sequence is QDSVGNSNRSETSTSDNTETYQENTSSSGH. A Phosphothreonine modification is found at Thr142. 2 C2H2-type zinc fingers span residues 157-180 and 187-215; these read FKCP…NSNH and VTCP…NQRH. Positions 225-243 constitute a UIM domain; the sequence is LQLDEETQYQTAVEESFQV.

Interacts with NLK. Interacts with XRCC5/Ku80. Interacts with RBBP8/CtIP. Post-translationally, auto-ubiquitinated.

The protein resides in the chromosome. It carries out the reaction S-ubiquitinyl-[E2 ubiquitin-conjugating enzyme]-L-cysteine + [acceptor protein]-L-lysine = [E2 ubiquitin-conjugating enzyme]-L-cysteine + N(6)-ubiquitinyl-[acceptor protein]-L-lysine.. It functions in the pathway protein modification; protein ubiquitination. E3 ubiquitin-protein ligase involved in DNA damage response by promoting DNA resection and homologous recombination. Recruited to sites of double-strand breaks following DNA damage and specifically promotes double-strand break repair via homologous recombination. Two different, non-exclusive, mechanisms have been proposed. According to a report, regulates the choice of double-strand break repair by favoring homologous recombination over non-homologous end joining (NHEJ): acts by mediating ubiquitination of XRCC5/Ku80, leading to remove the Ku complex from DNA breaks, thereby promoting homologous recombination. According to another report, cooperates with UBE2Ds E2 ubiquitin ligases (UBE2D1, UBE2D2, UBE2D3 or UBE2D4) to promote homologous recombination by mediating ubiquitination of RBBP8/CtIP. Together with NLK, involved in the ubiquitination and degradation of TCF/LEF. Also exhibits auto-ubiquitination activity in combination with UBE2K. May act as a negative regulator in the Wnt/beta-catenin-mediated signaling pathway. This chain is E3 ubiquitin-protein ligase RNF138, found in Homo sapiens (Human).